A 612-amino-acid polypeptide reads, in one-letter code: tRNA 5-methylaminomethyl-2-thiouridine biosynthesis bifunctional protein MnmC (612 aa).

The tract at residues 1-218 (MITFRGDGLY…KREILEASLE (218 aa)) is tRNA (mnm(5)s(2)U34)-methyltransferase. The interval 244–612 (IGAGVAGLAA…VRKLKRGLVR (369 aa)) is FAD-dependent cmnm(5)s(2)U34 oxidoreductase.

This sequence in the N-terminal section; belongs to the methyltransferase superfamily. tRNA (mnm(5)s(2)U34)-methyltransferase family. In the C-terminal section; belongs to the DAO family. FAD serves as cofactor.

Its subcellular location is the cytoplasm. The enzyme catalyses 5-aminomethyl-2-thiouridine(34) in tRNA + S-adenosyl-L-methionine = 5-methylaminomethyl-2-thiouridine(34) in tRNA + S-adenosyl-L-homocysteine + H(+). Catalyzes the last two steps in the biosynthesis of 5-methylaminomethyl-2-thiouridine (mnm(5)s(2)U) at the wobble position (U34) in tRNA. Catalyzes the FAD-dependent demodification of cmnm(5)s(2)U34 to nm(5)s(2)U34, followed by the transfer of a methyl group from S-adenosyl-L-methionine to nm(5)s(2)U34, to form mnm(5)s(2)U34. The polypeptide is tRNA 5-methylaminomethyl-2-thiouridine biosynthesis bifunctional protein MnmC (Campylobacter fetus subsp. fetus (strain 82-40)).